Here is a 939-residue protein sequence, read N- to C-terminus: Trafficking kinesin-binding protein 1 (939 aa).

An HAP1 N-terminal domain is found at 46-353 (LEEQLPHYKL…EELKNLRNKT (308 aa)). Positions 106 to 354 (KTYNDIDAVT…ELKNLRNKTM (249 aa)) form a coiled coil. Residues 359–509 (RYHSLGLFPM…SLRRENYLSE (151 aa)) are interaction with HGS. Serine 444 is a glycosylation site (O-linked (GlcNAc) serine). The disordered stretch occupies residues 472–492 (LGNEDHNKKPGTPGTPGSHDL). Residues 490-524 (HDLETALRRLSLRRENYLSERRFFEEEQERKLREL) adopt a coiled-coil conformation. Serine 534 carries the phosphoserine modification. An interaction with OGT region spans residues 655-669 (PGKCMSQTNSTFTFT). Serine 677 and serine 716 each carry an O-linked (GlcNAc) serine glycan. 2 positions are modified to phosphoserine: serine 716 and serine 905.

This sequence belongs to the milton family. Interacts with RHOT1 and RHOT2. Found in a complex with KIF5B, OGT, RHOT1 and RHOT2. Interacts with HGS. Interacts with GABRA1. Interacts with KIF5C. Interacts with OGT; stable interaction is not required for glycosylation of this protein by OGT. Isoform 1 interacts with OGT. O-glycosylated. Glycosylated by OGT; glycosylation in response to increased extracellular glucose levels is required for and leads to regulation of mitochondrial motility by OGT. In terms of tissue distribution, widely expressed with the greatest expression in brain, liver and kidney. Detected throughout the CNS, including the cortex, hippocamps, thalamus and various subcortical nuclei of the forebrain and midbrain, the granule of Purkinje layers of the cerebellum and the gray matter of the spinal cord. High level detected in lower moter neurons (at protein level).

The protein localises to the cytoplasm. Its subcellular location is the nucleus. It localises to the mitochondrion. The protein resides in the early endosome. It is found in the endosome. The protein localises to the mitochondrion membrane. Its subcellular location is the cell cortex. Its function is as follows. Involved in the regulation of endosome-to-lysosome trafficking, including endocytic trafficking of EGF-EGFR complexes and GABA-A receptors. Involved in mitochondrial motility. When O-glycosylated, abolishes mitochondrial motility. Crucial for recruiting OGT to the mitochondrial surface of neuronal processes. TRAK1 and RHOT form an essential protein complex that links KIF5 to mitochondria for light chain-independent, anterograde transport of mitochondria. In Mus musculus (Mouse), this protein is Trafficking kinesin-binding protein 1 (Trak1).